The sequence spans 232 residues: Pseudaminic acid cytidylyltransferase (232 aa).

It belongs to the CMP-NeuNAc synthase family. The cofactor is Mg(2+).

The enzyme catalyses pseudaminate + CTP = CMP-pseudaminate + diphosphate. Its function is as follows. Catalyzes the final step in the biosynthesis of pseudaminic acid, a sialic-acid-like sugar that is used to modify flagellin. Mediates the activation of pseudaminic acid with CMP by forming CMP-pseudaminic acid. In Campylobacter jejuni subsp. jejuni serotype O:23/36 (strain 81-176), this protein is Pseudaminic acid cytidylyltransferase (pseF).